The chain runs to 533 residues: Thromboxane-A synthase (533 aa).

The Cytoplasmic segment spans residues 1 to 10 (MEVLGLLKFE). Residues 11–31 (VSGTIVTVTLLVALLALLKWY) traverse the membrane as a helical segment. Residues 32 to 75 (SMSAFSRLEKLGIRHPKPSPFVGNLMFFRQGFWESQLELRERYG) are Lumenal-facing. Residues 76-96 (PLCGYYLGRRMHVVISEPDMI) form a helical membrane-spanning segment. Residues 97–223 (KQVLVENFSN…RRASTFCIPR (127 aa)) lie on the Cytoplasmic side of the membrane. A helical transmembrane segment spans residues 224-244 (PLLVLILSFPSIMVPLARILP). The Lumenal segment spans residues 245–335 (NKNRDELNGF…FTVDEIVGQA (91 aa)). A helical transmembrane segment spans residues 336-356 (FLFLIAGHEVITNTLSFITYL). Residues 357–533 (LATHPDCQER…NGVYIKIVSR (177 aa)) lie on the Cytoplasmic side of the membrane. Cysteine 479 contacts heme.

The protein belongs to the cytochrome P450 family. In terms of assembly, monomer. Requires heme as cofactor. In terms of tissue distribution, expressed primarily in lung, kidney, and spleen.

The protein localises to the endoplasmic reticulum membrane. The catalysed reaction is prostaglandin H2 = thromboxane A2. The enzyme catalyses prostaglandin H2 = (12S)-hydroxy-(5Z,8E,10E)-heptadecatrienoate + malonaldehyde. It catalyses the reaction a hydroperoxyeicosatetraenoate = an oxoeicosatetraenoate + H2O. It carries out the reaction (15S)-hydroperoxy-(5Z,8Z,11Z,13E)-eicosatetraenoate = 15-oxo-(5Z,8Z,11Z,13E)-eicosatetraenoate + H2O. The catalysed reaction is (15S)-hydroperoxy-(5Z,8Z,11Z,13E)-eicosatetraenoate + AH2 = (15S)-hydroxy-(5Z,8Z,11Z,13E)-eicosatetraenoate + A + H2O. In terms of biological role, catalyzes the conversion of prostaglandin H2 (PGH2) to thromboxane A2 (TXA2), a potent inducer of blood vessel constriction and platelet aggregation. Also cleaves PGH2 to 12-hydroxy-heptadecatrienoicacid (12-HHT) and malondialdehyde, which is known to act as a mediator of DNA damage. 12-HHT and malondialdehyde are formed stoichiometrically in the same amounts as TXA2. Additionally, displays dehydratase activity, toward (15S)-hydroperoxy-(5Z,8Z,11Z,13E)-eicosatetraenoate (15(S)-HPETE) producing 15-KETE and 15-HETE. The protein is Thromboxane-A synthase (Tbxas1) of Mus musculus (Mouse).